The primary structure comprises 391 residues: Paired box protein Pax-5 (391 aa).

Positions 16-142 form a DNA-binding region, paired; it reads GHGGVNQLGG…SSINRIIRTK (127 aa). The tract at residues 19 to 75 is PAI subdomain; sequence GVNQLGGVFVNGRPLPDVVRQRIVELAHQGVRPCDISRQLRVSHGCVSKILGRYYET. The interval 94–142 is RED subdomain; sequence KVVEKIAEYKRQNPTMFAWEIRDRLLAERVCDNDTVPSVSSINRIIRTK. Residues 182–218 form a disordered region; the sequence is SGILGITSPSADTNKRKRDEGIQESPVPNGHSLPGRD.

As to quaternary structure, interacts with ETS1; this interaction alters PAX5 DNA-binding properties. Binds DNA as a monomer. Interacts with TBP; this interaction allows PAX5 to interact with the basal transcription machinery. Interacts with RB1. Interacts with TLE4. Interacts with DAXX. O-glycosylated. Post-translationally, phosphorylated by SYK. This phosphorylation plays an important role in the abolition of BLIMP1 repression by PAX5 in order to trigger plasma cell differentiation. Expressed in all B-lymphoid organs, in the embryonic midbrain and in adult testis.

It is found in the nucleus. Functionally, transcription factor that plays an essential role in commitment of lymphoid progenitors to the B-lymphocyte lineage. Fulfills a dual role by repressing B-lineage inappropriate genes and simultaneously activating B-lineage-specific genes. In turn, regulates cell adhesion and migration, induces V(H)-to-D(H)J(H) recombination, facilitates pre-B-cell receptor signaling and promotes development to the mature B-cell stage. Repression of the cohesin-release factor WAPL causes global changes of the chromosomal architecture in pro-B cells to facilitate the generation of a diverse antibody repertoire. In Mus musculus (Mouse), this protein is Paired box protein Pax-5 (Pax5).